Consider the following 534-residue polypeptide: NAD(P)H-quinone oxidoreductase chain 4 (534 aa).

The next 14 membrane-spanning stretches (helical) occupy residues 6–26 (FPWL…LPFI), 38–58 (WYAL…FYTQ), 91–111 (MPLI…SWPV), 117–137 (LFYF…AVQD), 138–158 (LLVF…LLSI), 171–191 (FILY…AMAF), 214–234 (LLCY…VPLH), 245–265 (TAPV…YALI), 279–299 (FAPA…LTSF), 316–336 (MGFV…GAVL), 337–357 (QMVS…ATYD), 377–399 (IFAM…GFVA), 419–439 (VPVV…LLSM), and 466–486 (IFVI…PKII).

Belongs to the complex I subunit 4 family.

The protein resides in the cellular thylakoid membrane. The catalysed reaction is a plastoquinone + NADH + (n+1) H(+)(in) = a plastoquinol + NAD(+) + n H(+)(out). It catalyses the reaction a plastoquinone + NADPH + (n+1) H(+)(in) = a plastoquinol + NADP(+) + n H(+)(out). In terms of biological role, NDH-1 shuttles electrons from NAD(P)H, via FMN and iron-sulfur (Fe-S) centers, to quinones in the respiratory chain. The immediate electron acceptor for the enzyme in this species is believed to be plastoquinone. Couples the redox reaction to proton translocation (for every two electrons transferred, four hydrogen ions are translocated across the cytoplasmic membrane), and thus conserves the redox energy in a proton gradient. The sequence is that of NAD(P)H-quinone oxidoreductase chain 4 from Acaryochloris marina (strain MBIC 11017).